A 374-amino-acid polypeptide reads, in one-letter code: Alpha-galactosylglucosyldiacylglycerol synthase (374 aa).

This sequence belongs to the glycosyltransferase group 1 family. Glycosyltransferase 4 subfamily. It depends on Mg(2+) as a cofactor.

It is found in the cell membrane. It carries out the reaction a 1,2-diacyl-3-O-(alpha-D-glucopyranosyl)-sn-glycerol + UDP-alpha-D-galactose = a 1,2-diacyl-3-O-[alpha-D-galactopyranosyl-(1-&gt;2)-alpha-D-glucopyranosyl]-sn-glycerol + UDP + H(+). Its activity is regulated as follows. Activated by the negatively charged lipid phosphatidylglycerol (PG). Its function is as follows. Galactosyltransferase involved in the biosynthesis of the bilayer-forming membrane lipid alpha-galactosyl-glucosyldiacylglycerol which is involved in maintaining constant nonbilayer/bilayer conditions (curvature packing stress). Also involved in the beta-lactam resistance. Catalyzes the transfer of a galactosyl residue from UDP-Gal to alpha-glucosyl-DAG (1,2-diacyl-3-O-(alpha-D-glucopyranosyl)-sn-glycerol) acceptor to form the corresponding galactosyl-glycosyl-DAG product (3-O-alpha-(D-galactopyranosyl-alpha-(1-&gt;2)-D-glucopyranosyl)-1,2-diacyl-sn-glycerol). It can only use UDP-Gal as sugar donor and alpha-glucosyl-DAG is the preferred sugar acceptor. This is Alpha-galactosylglucosyldiacylglycerol synthase (cpoA) from Streptococcus pneumoniae (strain ATCC BAA-255 / R6).